A 312-amino-acid polypeptide reads, in one-letter code: ADP-L-glycero-D-manno-heptose-6-epimerase (312 aa).

NADP(+)-binding positions include Phe-10–Ile-11, Asp-31–Asn-32, Lys-38, Lys-53, Glu-75–Ser-79, and Asn-92. The Proton acceptor role is filled by Tyr-140. Residue Lys-144 participates in NADP(+) binding. Residue Asn-169 participates in substrate binding. Residues Val-170 and Lys-178 each contribute to the NADP(+) site. Lys-178 acts as the Proton acceptor in catalysis. Substrate-binding positions include Ser-180, His-187, Phe-201 to Ser-204, Arg-209, and Tyr-274.

It belongs to the NAD(P)-dependent epimerase/dehydratase family. HldD subfamily. Homopentamer. The cofactor is NADP(+).

The catalysed reaction is ADP-D-glycero-beta-D-manno-heptose = ADP-L-glycero-beta-D-manno-heptose. It functions in the pathway nucleotide-sugar biosynthesis; ADP-L-glycero-beta-D-manno-heptose biosynthesis; ADP-L-glycero-beta-D-manno-heptose from D-glycero-beta-D-manno-heptose 7-phosphate: step 4/4. The protein operates within bacterial outer membrane biogenesis; LPS core biosynthesis. Functionally, catalyzes the interconversion between ADP-D-glycero-beta-D-manno-heptose and ADP-L-glycero-beta-D-manno-heptose via an epimerization at carbon 6 of the heptose. The polypeptide is ADP-L-glycero-D-manno-heptose-6-epimerase (Photorhabdus laumondii subsp. laumondii (strain DSM 15139 / CIP 105565 / TT01) (Photorhabdus luminescens subsp. laumondii)).